A 479-amino-acid chain; its full sequence is Fibrinogen beta chain (479 aa).

A signal peptide spans 1-18 (MRHLWLLLLSVSLVQTQA). A disordered region spans residues 20 to 82 (TTDSDKVDLS…VERKPPDAGG (63 aa)). The interval 33–35 (GHR) is beta-chain polymerization, binding distal domain of another fibrin. 2 stretches are compositionally biased toward basic and acidic residues: residues 35-45 (RPVDRRKEEPP) and 64-78 (AKVD…RKPP). Cystine bridges form between C219–C304 and C229–C258. One can recognise a Fibrinogen C-terminal domain in the interval 220-476 (NIPVVSGKEC…RMSMKIRPVF (257 aa)). N382 carries an N-linked (GlcNAc...) asparagine glycan. A disulfide bond links C412 and C425.

Heterohexamer; disulfide linked. Contains 2 sets of 3 non-identical chains (alpha, beta and gamma). The 2 heterotrimers are in head to head conformation with the N-termini in a small central domain. Post-translationally, conversion of fibrinogen to fibrin is triggered by thrombin, which cleaves fibrinopeptides A and B from alpha and beta chains, and thus exposes the N-terminal polymerization sites responsible for the formation of the soft clot.

It is found in the secreted. Cleaved by the protease thrombin to yield monomers which, together with fibrinogen alpha (FGA) and fibrinogen gamma (FGG), polymerize to form an insoluble fibrin matrix. Fibrin has a major function in hemostasis as one of the primary components of blood clots. In addition, functions during the early stages of wound repair to stabilize the lesion and guide cell migration during re-epithelialization. Was originally thought to be essential for platelet aggregation, based on in vitro studies using anticoagulated blood. However subsequent studies have shown that it is not absolutely required for thrombus formation in vivo. Enhances expression of SELP in activated platelets. Maternal fibrinogen is essential for successful pregnancy. Fibrin deposition is also associated with infection, where it protects against IFNG-mediated hemorrhage. May also facilitate the antibacterial immune response via both innate and T-cell mediated pathways. This Rattus norvegicus (Rat) protein is Fibrinogen beta chain (Fgb).